The sequence spans 750 residues: Tegument protein UL46 homolog (750 aa).

4 disordered regions span residues 437-484, 525-593, 610-669, and 692-750; these read FCCP…SPRT, QRSD…DYMR, YTPY…EVVY, and SASR…VSSL. The segment covering 465 to 484 has biased composition (polar residues); it reads LRSSRQLPTSPPSNIVSPRT. A compositionally biased stretch (low complexity) spans 528 to 540; sequence DSSSSDNSTCSST. Over residues 541–553 the composition is skewed to polar residues; it reads ETQYITLPSTPSP. Basic and acidic residues-rich tracts occupy residues 710–727 and 739–750; these read VCRERDEESAEPRHDGFI and KHPDQTERVSSL.

Belongs to the herpesviridae HHV-1 VP11/12 protein family.

It is found in the virion tegument. Its subcellular location is the host cell membrane. Modulates alpha trans-inducing factor-dependent activation of alpha genes. The protein is Tegument protein UL46 homolog of Equine herpesvirus 1 (strain V592) (EHV-1).